A 422-amino-acid chain; its full sequence is Trichothecene biosynthesis transcription regulator TRI10 (422 aa).

The protein belongs to the TRI10 transcription regulator family.

It localises to the nucleus. Its function is as follows. Transcriptional activator of all of the trichothecene biosynthesis genes. Acts upstream of the cluster-encoded transcription factor TRI6 and is necessary for full expression of both the other trichothecene genes and the genes for the primary metabolic pathway that precedes the trichothecene biosynthetic pathway. The chain is Trichothecene biosynthesis transcription regulator TRI10 from Trichoderma arundinaceum.